A 291-amino-acid chain; its full sequence is Acetyl-coenzyme A carboxylase carboxyl transferase subunit beta (291 aa).

The 269-residue stretch at 23–291 (VWHKCPSCTA…PPDLPVEESV (269 aa)) folds into the CoA carboxyltransferase N-terminal domain. Zn(2+)-binding residues include Cys-27, Cys-30, Cys-46, and Cys-49. The C4-type zinc finger occupies 27 to 49 (CPSCTAVLYRVELERNLEVCPKC).

Belongs to the AccD/PCCB family. Acetyl-CoA carboxylase is a heterohexamer composed of biotin carboxyl carrier protein (AccB), biotin carboxylase (AccC) and two subunits each of ACCase subunit alpha (AccA) and ACCase subunit beta (AccD). Zn(2+) is required as a cofactor.

The protein localises to the cytoplasm. The enzyme catalyses N(6)-carboxybiotinyl-L-lysyl-[protein] + acetyl-CoA = N(6)-biotinyl-L-lysyl-[protein] + malonyl-CoA. It functions in the pathway lipid metabolism; malonyl-CoA biosynthesis; malonyl-CoA from acetyl-CoA: step 1/1. Component of the acetyl coenzyme A carboxylase (ACC) complex. Biotin carboxylase (BC) catalyzes the carboxylation of biotin on its carrier protein (BCCP) and then the CO(2) group is transferred by the transcarboxylase to acetyl-CoA to form malonyl-CoA. In Coxiella burnetii (strain RSA 331 / Henzerling II), this protein is Acetyl-coenzyme A carboxylase carboxyl transferase subunit beta.